Reading from the N-terminus, the 40-residue chain is Natriuretic peptide PtNP-a (40 aa).

The cysteines at positions 9 and 25 are disulfide-linked. The segment covering 17–34 has biased composition (polar residues); the sequence is ISNTSGMGCRNPIQNRPK. The tract at residues 17 to 40 is disordered; it reads ISNTSGMGCRNPIQNRPKSTPGGS.

This sequence belongs to the natriuretic peptide family. In terms of tissue distribution, expressed by the venom gland.

Its subcellular location is the secreted. Snake venom natriuretic peptide that targets NPR1 and possibly NPR2. Exhibits hypotensive and vasodepressor activities. Recombinant PtNP-a demonstrates a dose-dependent stimulation of cGMP production via the natriuretic peptide receptor 1 (NPR1) (EC(50)=563 nM) in Madine Darby Canine Kidney (MDCK) cells. It also inhibits the angiotensin converting enzyme (ACE). In Pseudonaja textilis (Eastern brown snake), this protein is Natriuretic peptide PtNP-a.